The following is a 239-amino-acid chain: Ribonuclease PH (239 aa).

Residues arginine 88 and 126–128 (GTR) each bind phosphate.

Belongs to the RNase PH family. In terms of assembly, homohexameric ring arranged as a trimer of dimers.

The enzyme catalyses tRNA(n+1) + phosphate = tRNA(n) + a ribonucleoside 5'-diphosphate. Phosphorolytic 3'-5' exoribonuclease that plays an important role in tRNA 3'-end maturation. Removes nucleotide residues following the 3'-CCA terminus of tRNAs; can also add nucleotides to the ends of RNA molecules by using nucleoside diphosphates as substrates, but this may not be physiologically important. Probably plays a role in initiation of 16S rRNA degradation (leading to ribosome degradation) during starvation. In Coxiella burnetii (strain Dugway 5J108-111), this protein is Ribonuclease PH.